The following is an 84-amino-acid chain: Cell division topological specificity factor (84 aa).

Belongs to the MinE family.

Its function is as follows. Prevents the cell division inhibition by proteins MinC and MinD at internal division sites while permitting inhibition at polar sites. This ensures cell division at the proper site by restricting the formation of a division septum at the midpoint of the long axis of the cell. This chain is Cell division topological specificity factor, found in Paraburkholderia phymatum (strain DSM 17167 / CIP 108236 / LMG 21445 / STM815) (Burkholderia phymatum).